Reading from the N-terminus, the 246-residue chain is Bis(5'-nucleosyl)-tetraphosphatase PrpE [asymmetrical] (246 aa).

Belongs to the PrpE family. Ni(2+) is required as a cofactor.

The enzyme catalyses P(1),P(4)-bis(5'-guanosyl) tetraphosphate + H2O = GMP + GTP + 2 H(+). Its function is as follows. Asymmetrically hydrolyzes Ap4p to yield AMP and ATP. In Bacillus cereus (strain B4264), this protein is Bis(5'-nucleosyl)-tetraphosphatase PrpE [asymmetrical].